The sequence spans 521 residues: Maturase K (521 aa).

This sequence belongs to the intron maturase 2 family. MatK subfamily.

Its subcellular location is the plastid. The protein localises to the chloroplast. Its function is as follows. Usually encoded in the trnK tRNA gene intron. Probably assists in splicing its own and other chloroplast group II introns. This Kniphofia uvaria (Red-hot poker) protein is Maturase K.